The primary structure comprises 111 residues: Iron-sulfur cluster assembly protein CyaY (111 aa).

It belongs to the frataxin family.

In terms of biological role, involved in iron-sulfur (Fe-S) cluster assembly. May act as a regulator of Fe-S biogenesis. In Cupriavidus metallidurans (strain ATCC 43123 / DSM 2839 / NBRC 102507 / CH34) (Ralstonia metallidurans), this protein is Iron-sulfur cluster assembly protein CyaY.